A 149-amino-acid polypeptide reads, in one-letter code: SsrA-binding protein (149 aa).

Belongs to the SmpB family.

Its subcellular location is the cytoplasm. Required for rescue of stalled ribosomes mediated by trans-translation. Binds to transfer-messenger RNA (tmRNA), required for stable association of tmRNA with ribosomes. tmRNA and SmpB together mimic tRNA shape, replacing the anticodon stem-loop with SmpB. tmRNA is encoded by the ssrA gene; the 2 termini fold to resemble tRNA(Ala) and it encodes a 'tag peptide', a short internal open reading frame. During trans-translation Ala-aminoacylated tmRNA acts like a tRNA, entering the A-site of stalled ribosomes, displacing the stalled mRNA. The ribosome then switches to translate the ORF on the tmRNA; the nascent peptide is terminated with the 'tag peptide' encoded by the tmRNA and targeted for degradation. The ribosome is freed to recommence translation, which seems to be the essential function of trans-translation. In Anaplasma marginale (strain Florida), this protein is SsrA-binding protein.